A 369-amino-acid chain; its full sequence is 3,4-dihydroxy-2-butanone 4-phosphate synthase (369 aa).

The segment at 1–201 is DHBP synthase; that stretch reads MAFDRIEDII…IADLIHYRLS (201 aa). D-ribulose 5-phosphate is bound by residues 27–28, Asp32, 140–144, and Glu164; these read RE and RAGHT. Mg(2+) is bound at residue Glu28. Residue His143 coordinates Mg(2+). Positions 202 to 369 are GTP cyclohydrolase II-like; it reads TEHTIVRIGE…EVIESIPFPG (168 aa).

The protein in the N-terminal section; belongs to the DHBP synthase family. This sequence in the C-terminal section; belongs to the GTP cyclohydrolase II family. It depends on Mg(2+) as a cofactor. Requires Mn(2+) as cofactor.

It carries out the reaction D-ribulose 5-phosphate = (2S)-2-hydroxy-3-oxobutyl phosphate + formate + H(+). Its pathway is cofactor biosynthesis; riboflavin biosynthesis; 2-hydroxy-3-oxobutyl phosphate from D-ribulose 5-phosphate: step 1/1. In terms of biological role, catalyzes the conversion of D-ribulose 5-phosphate to formate and 3,4-dihydroxy-2-butanone 4-phosphate. The sequence is that of 3,4-dihydroxy-2-butanone 4-phosphate synthase (ribB) from Pseudomonas syringae pv. tomato (strain ATCC BAA-871 / DC3000).